Here is a 257-residue protein sequence, read N- to C-terminus: 5-oxoprolinase subunit A (257 aa).

This sequence belongs to the LamB/PxpA family. As to quaternary structure, forms a complex composed of PxpA, PxpB and PxpC.

It catalyses the reaction 5-oxo-L-proline + ATP + 2 H2O = L-glutamate + ADP + phosphate + H(+). Catalyzes the cleavage of 5-oxoproline to form L-glutamate coupled to the hydrolysis of ATP to ADP and inorganic phosphate. The chain is 5-oxoprolinase subunit A from Oceanobacillus iheyensis (strain DSM 14371 / CIP 107618 / JCM 11309 / KCTC 3954 / HTE831).